A 241-amino-acid polypeptide reads, in one-letter code: Ribonuclease PH (241 aa).

Residues Arg-87 and 125–127 (GTR) each bind phosphate.

This sequence belongs to the RNase PH family. As to quaternary structure, homohexameric ring arranged as a trimer of dimers.

The catalysed reaction is tRNA(n+1) + phosphate = tRNA(n) + a ribonucleoside 5'-diphosphate. In terms of biological role, phosphorolytic 3'-5' exoribonuclease that plays an important role in tRNA 3'-end maturation. Removes nucleotide residues following the 3'-CCA terminus of tRNAs; can also add nucleotides to the ends of RNA molecules by using nucleoside diphosphates as substrates, but this may not be physiologically important. Probably plays a role in initiation of 16S rRNA degradation (leading to ribosome degradation) during starvation. The chain is Ribonuclease PH from Dehalococcoides mccartyi (strain ATCC BAA-2100 / JCM 16839 / KCTC 5957 / BAV1).